The following is a 315-amino-acid chain: Ribosomal protein L11 methyltransferase (315 aa).

Thr-161, Gly-182, Asp-204, and Asn-248 together coordinate S-adenosyl-L-methionine.

This sequence belongs to the methyltransferase superfamily. PrmA family.

It is found in the cytoplasm. It carries out the reaction L-lysyl-[protein] + 3 S-adenosyl-L-methionine = N(6),N(6),N(6)-trimethyl-L-lysyl-[protein] + 3 S-adenosyl-L-homocysteine + 3 H(+). In terms of biological role, methylates ribosomal protein L11. The protein is Ribosomal protein L11 methyltransferase of Shouchella clausii (strain KSM-K16) (Alkalihalobacillus clausii).